A 138-amino-acid polypeptide reads, in one-letter code: UPF0310 protein MAV_1800 (138 aa).

Belongs to the UPF0310 family.

The protein is UPF0310 protein MAV_1800 of Mycobacterium avium (strain 104).